Here is a 489-residue protein sequence, read N- to C-terminus: Glycogen synthase (489 aa).

Lys-15 lines the ADP-alpha-D-glucose pocket.

Belongs to the glycosyltransferase 1 family. Bacterial/plant glycogen synthase subfamily.

It carries out the reaction [(1-&gt;4)-alpha-D-glucosyl](n) + ADP-alpha-D-glucose = [(1-&gt;4)-alpha-D-glucosyl](n+1) + ADP + H(+). It participates in glycan biosynthesis; glycogen biosynthesis. Synthesizes alpha-1,4-glucan chains using ADP-glucose. The polypeptide is Glycogen synthase (Francisella tularensis subsp. mediasiatica (strain FSC147)).